We begin with the raw amino-acid sequence, 24 residues long: Ascaphin-4 (24 aa).

Expressed by the skin glands.

The protein resides in the secreted. In terms of biological role, antimicrobial peptide that shows higher potency against Gram-negative bacteria than against Gram-positive bacteria. Has a very week hemolytic activity. The protein is Ascaphin-4 of Ascaphus truei (Coastal tailed frog).